A 374-amino-acid polypeptide reads, in one-letter code: 3-dehydroquinate synthase (374 aa).

This sequence belongs to the archaeal-type DHQ synthase family.

The catalysed reaction is 2-amino-2,3,7-trideoxy-D-lyxo-hept-6-ulosonate + NAD(+) + H2O = 3-dehydroquinate + NH4(+) + NADH + H(+). Its function is as follows. Catalyzes the oxidative deamination and cyclization of 2-amino-3,7-dideoxy-D-threo-hept-6-ulosonic acid (ADH) to yield 3-dehydroquinate (DHQ), which is fed into the canonical shikimic pathway of aromatic amino acid biosynthesis. In Methanothermobacter thermautotrophicus (strain ATCC 29096 / DSM 1053 / JCM 10044 / NBRC 100330 / Delta H) (Methanobacterium thermoautotrophicum), this protein is 3-dehydroquinate synthase.